The chain runs to 63 residues: uncharacterized protein (63 aa).

This is an uncharacterized protein from Thermoproteus tenax virus 1 (strain KRA1) (TTV1).